We begin with the raw amino-acid sequence, 359 residues long: 4-galactosyl-N-acetylglucosaminide 3-alpha-L-fucosyltransferase 9 (359 aa).

Residues 1–11 (MTSASKGILRP) lie on the Cytoplasmic side of the membrane. Residues 12 to 32 (FLIVCIILGCFMACLLIYIKP) form a helical; Signal-anchor for type II membrane protein membrane-spanning segment. Over 33 to 359 (TNSWIFSPME…VGNLEKWFWN (327 aa)) the chain is Lumenal. Asparagine 62 is a glycosylation site (N-linked (GlcNAc...) asparagine). Residues 63–168 (ETTILIWVWP…RRDSDIQVPY (106 aa)) are acceptor-binding. Residue glutamine 75 participates in a beta-D-galactosyl-(1-&gt;4)-N-acetyl-beta-D-glucosaminyl derivative binding. 3 disulfides stabilise this stretch: cysteine 82–cysteine 335, cysteine 91–cysteine 338, and cysteine 190–cysteine 238. N-linked (GlcNAc...) asparagine glycosylation occurs at asparagine 101. An a beta-D-galactosyl-(1-&gt;4)-N-acetyl-beta-D-glucosaminyl derivative-binding site is contributed by glutamate 137. The active-site Nucleophile is glutamate 137. Glutamate 137 provides a ligand contact to GDP-beta-L-fucose. Residue asparagine 153 is glycosylated (N-linked (GlcNAc...) asparagine). The GDP-beta-L-fucose site is built by tyrosine 168, valine 192, serine 194, asparagine 195, arginine 202, valine 226, tyrosine 241, asparagine 246, tyrosine 252, glutamate 255, and lysine 256. The donor-binding stretch occupies residues 169–326 (GFLTVSTNPF…NWRKDFTVNL (158 aa)). An acceptor-binding region spans residues 327–359 (PRFWESHACLACDHVKRHQEYKSVGNLEKWFWN).

The protein belongs to the glycosyltransferase 10 family. In terms of assembly, homodimer. Post-translationally, N-glycosylated with complex-type N-glycans.

The protein localises to the golgi apparatus. It localises to the trans-Golgi network membrane. Its subcellular location is the golgi apparatus membrane. The enzyme catalyses a beta-D-galactosyl-(1-&gt;4)-N-acetyl-beta-D-glucosaminyl derivative + GDP-beta-L-fucose = a beta-D-galactosyl-(1-&gt;4)-[alpha-L-fucosyl-(1-&gt;3)]-N-acetyl-beta-D-glucosaminyl derivative + GDP + H(+). The catalysed reaction is an alpha-Neu5Ac-(2-&gt;3)-beta-D-Gal-(1-&gt;4)-beta-D-GlcNAc-(1-&gt;3)-beta-D-Gal-(1-&gt;4)-beta-D-GlcNAc derivative + GDP-beta-L-fucose = an alpha-Neu5Ac-(2-&gt;3)-beta-D-Gal-(1-&gt;4)-beta-D-GlcNAc-(1-&gt;3)-beta-D-Gal-(1-&gt;4)-[alpha-L-Fuc-(1-&gt;3)]-beta-D-GlcNAc derivative + GDP + H(+). It carries out the reaction alpha-N-glycoloylneuraminosyl-(2-&gt;3)-beta-D-galactosyl-(1-&gt;4)-N-acetyl-beta-D-glucosaminyl-(1-&gt;3)-beta-D-galactosyl-(1-&gt;4)-N-acetyl-beta-D-glucosaminyl-(1-&gt;3)-beta-D-galactosyl-(1-&gt;4)-beta-D-glucosyl-(1&lt;-&gt;1')-ceramide + GDP-beta-L-fucose = alpha-N-glycoloylneuraminosyl-(2-&gt;3)-beta-D-galactosyl-(1-&gt;4)-N-acetyl-beta-D-glucosaminyl-(1-&gt;3)-beta-D-galactosyl-(1-&gt;4)-[alpha-L-fucosyl-(1-&gt;3)]-N-acetyl-beta-D-glucosaminyl-(1-&gt;3)-beta-D-galactosyl-(1-&gt;4)-beta-D-glucosyl-(1&lt;-&gt;1')-ceramide + GDP + H(+). It catalyses the reaction alpha-D-galactosyl-(1-&gt;3)-beta-D-galactosyl-(1-&gt;4)-N-acetyl-beta-D-glucosaminyl-(1-&gt;3)-beta-D-galactosyl-(1-&gt;4)-beta-D-glucosyl-(1&lt;-&gt;1')-ceramide + GDP-beta-L-fucose = a neolactoside IV(3)-alpha-Gal,III(3)-alpha-Fuc-nLc4Cer + GDP + H(+). The enzyme catalyses a neolactoside nLc4Cer + GDP-beta-L-fucose = a neolactoside III(3)-alpha-Fuc-nLc4Cer + GDP + H(+). The catalysed reaction is an N-acetyl-alpha-neuraminyl-(2-&gt;3)-beta-D-galactosyl-(1-&gt;4)-N-acetyl-beta-D-glucosaminyl derivative + GDP-beta-L-fucose = an alpha-Neu5Ac-(2-&gt;3)-beta-D-Gal-(1-&gt;4)-[alpha-L-Fuc-(1-&gt;3)]-beta-D-GlcNAc derivative + GDP + H(+). It carries out the reaction beta-D-Gal-(1-&gt;4)-beta-D-GlcNAc-(1-&gt;3)-beta-D-Gal-(1-&gt;4)-D-Glc + GDP-beta-L-fucose = beta-D-Gal-(1-&gt;4)-[alpha-L-Fuc-(1-&gt;3)]-beta-D-GlcNAc-(1-&gt;3)-beta-D-Gal-(1-&gt;4)-D-Glc + GDP + H(+). It catalyses the reaction an alpha-L-Fuc-(1-&gt;2)-beta-D-Gal-(1-&gt;4)-beta-D-GlcNAc derivative + GDP-beta-L-fucose = an alpha-L-Fuc-(1-&gt;2)-beta-D-Gal-(1-&gt;4)-[alpha-L-Fuc-(1-&gt;3)]-beta-D-GlcNAc derivative + GDP + H(+). It participates in protein modification; protein glycosylation. It functions in the pathway glycolipid biosynthesis. Activated by Mn2+. Functionally, catalyzes alpha(1-&gt;3) linkage of fucosyl moiety transferred from GDP-beta-L-fucose to N-acetyl glucosamine (GlcNAc) within type 2 lactosamine (LacNAc, beta-D-Gal-(1-&gt;4)-beta-D-GlcNAc-) glycan attached to glycolipids and N- or O-linked glycoproteins. Fucosylates distal type 2 LacNAc and its fucosylated (H-type 2 LacNAc) and sialylated (sialyl-type 2 LacNAc) derivatives to form Lewis x (Lex) (CD15) and Lewis y (Ley) antigenic epitopes involved in cell adhesion and differentiation. Generates Lex epitopes in the brain, presumably playing a role in the maintenance of neuronal stemness and neurite outgrowth in progenitor neural cells. Fucosylates the internal type 2 LacNAc unit of the polylactosamine chain to form VIM-2 antigen that serves as recognition epitope for SELE. Can also modify milk oligosaccharides in particular type 2 tetrasaccharide LNnT. This chain is 4-galactosyl-N-acetylglucosaminide 3-alpha-L-fucosyltransferase 9, found in Canis lupus familiaris (Dog).